Here is a 217-residue protein sequence, read N- to C-terminus: DNA helicase assembly protein (217 aa).

The protein belongs to the Tequatrovirus DNA helicase assembly protein family. In terms of assembly, monomer. Homohexamer; when associated with DNA. Interacts (via C-terminus) with the DnaB-like replicative helicase (via C-terminus); this interaction brings about the rapid assembly of the helicase onto ssDNA. Interacts (via C-terminus) with the single-stranded DNA-binding protein; a ternary complex between the helicase assembly protein, the single-stranded DNA-binding protein and ssDNA is an obligatory intermediate in the helicase loading mechanism. Interacts with the viral DNA polymerase. Binds to single and double-stranded DNA. Part of the replicase complex that includes the DNA polymerase, the polymerase clamp, the clamp loader complex, the single-stranded DNA binding protein (SSB), the primase, the DnaB-like replicative helicase and the helicase assembly factor.

DNA helicase loader protein that participates in viral DNA replication, recombination, and repair. At the fork, required for loading of the replicative helicase onto DNA protected by the ssDNA-binding protein. Coordinates simultaneous synthesis of leading- and lagging-strands. In Enterobacteria phage T4 (Bacteriophage T4), this protein is DNA helicase assembly protein.